The following is a 133-amino-acid chain: Small ribosomal subunit protein uS8 (133 aa).

This sequence belongs to the universal ribosomal protein uS8 family. Part of the 30S ribosomal subunit. Contacts proteins S5 and S12.

One of the primary rRNA binding proteins, it binds directly to 16S rRNA central domain where it helps coordinate assembly of the platform of the 30S subunit. The protein is Small ribosomal subunit protein uS8 of Mycoplasmoides gallisepticum (strain R(low / passage 15 / clone 2)) (Mycoplasma gallisepticum).